A 281-amino-acid chain; its full sequence is MPTYDNHHALKGLTLGQPTEYHDTYQPALLQAVPRRLNREPLGLYPDSLPFGGADIWTLYELSWLNSKGVPQVAVGEVVLDASSINLIESKSFKLYLNSFNQTKFANWGEVRQILERDLSACAAGKVSVALFRLHEIEGQPVGHFDGYCIDEQDIVIDSYAFDAGYLHNAVGNEIVEEQLVSHLLKSNCLITNQPDWGTVQISYRGPRIQREALLRYLVSFRQHNEFHEQCVERIFSDILRYCQPESLSVYARYTRRGGLDINPWRSNTHFTPGRSRLVRQ.

Residue 88–90 coordinates substrate; sequence IES. Position 90–91 (90–91) interacts with NADPH; that stretch reads SK. C189 (thioimide intermediate) is an active-site residue. Residue D196 is the Proton donor of the active site. 228–229 lines the substrate pocket; it reads HE. 257–258 serves as a coordination point for NADPH; it reads RG.

This sequence belongs to the GTP cyclohydrolase I family. QueF type 2 subfamily. Homodimer.

The protein localises to the cytoplasm. It carries out the reaction 7-aminomethyl-7-carbaguanine + 2 NADP(+) = 7-cyano-7-deazaguanine + 2 NADPH + 3 H(+). It functions in the pathway tRNA modification; tRNA-queuosine biosynthesis. Functionally, catalyzes the NADPH-dependent reduction of 7-cyano-7-deazaguanine (preQ0) to 7-aminomethyl-7-deazaguanine (preQ1). The chain is NADPH-dependent 7-cyano-7-deazaguanine reductase from Erwinia tasmaniensis (strain DSM 17950 / CFBP 7177 / CIP 109463 / NCPPB 4357 / Et1/99).